A 95-amino-acid polypeptide reads, in one-letter code: Large ribosomal subunit protein bL25 (95 aa).

The segment at 1-20 is disordered; that stretch reads MSFKFNAEVRSKQGKGASRR.

Belongs to the bacterial ribosomal protein bL25 family. Part of the 50S ribosomal subunit; part of the 5S rRNA/L5/L18/L25 subcomplex. Contacts the 5S rRNA. Binds to the 5S rRNA independently of L5 and L18.

In terms of biological role, this is one of the proteins that binds to the 5S RNA in the ribosome where it forms part of the central protuberance. The chain is Large ribosomal subunit protein bL25 from Histophilus somni (strain 129Pt) (Haemophilus somnus).